We begin with the raw amino-acid sequence, 386 residues long: Succinate--CoA ligase [ADP-forming] subunit beta (386 aa).

The 236-residue stretch at 9–244 folds into the ATP-grasp domain; that stretch reads KAVLRSYGVS…LDEEDSKEIE (236 aa). ATP-binding positions include lysine 46, 53-55, glutamate 99, cysteine 102, and glutamate 107; that span reads GRG. 2 residues coordinate Mg(2+): asparagine 199 and aspartate 213. Substrate contacts are provided by residues asparagine 264 and 321-323; that span reads GIM.

This sequence belongs to the succinate/malate CoA ligase beta subunit family. In terms of assembly, heterotetramer of two alpha and two beta subunits. Mg(2+) is required as a cofactor.

It catalyses the reaction succinate + ATP + CoA = succinyl-CoA + ADP + phosphate. The catalysed reaction is GTP + succinate + CoA = succinyl-CoA + GDP + phosphate. Its pathway is carbohydrate metabolism; tricarboxylic acid cycle; succinate from succinyl-CoA (ligase route): step 1/1. Succinyl-CoA synthetase functions in the citric acid cycle (TCA), coupling the hydrolysis of succinyl-CoA to the synthesis of either ATP or GTP and thus represents the only step of substrate-level phosphorylation in the TCA. The beta subunit provides nucleotide specificity of the enzyme and binds the substrate succinate, while the binding sites for coenzyme A and phosphate are found in the alpha subunit. The chain is Succinate--CoA ligase [ADP-forming] subunit beta from Bacillus cereus (strain ATCC 14579 / DSM 31 / CCUG 7414 / JCM 2152 / NBRC 15305 / NCIMB 9373 / NCTC 2599 / NRRL B-3711).